The chain runs to 116 residues: Large ribosomal subunit protein bL17 (116 aa).

Belongs to the bacterial ribosomal protein bL17 family. In terms of assembly, part of the 50S ribosomal subunit. Contacts protein L32.

This Prochlorococcus marinus (strain MIT 9515) protein is Large ribosomal subunit protein bL17.